Reading from the N-terminus, the 565-residue chain is Translation machinery-associated protein 64 (565 aa).

The region spanning 89 to 170 (LPIVLTHGFV…VAVKIIHHFN (82 aa)) is the PUA domain. One can recognise an SWIB/MDM2 domain in the interval 362–447 (TLYKPFNLAK…GEILHPLLTN (86 aa)). The 73-residue stretch at 475-547 (IKIITEMKIG…SIIDHLNKLG (73 aa)) folds into the SUI1 domain.

The protein belongs to the eIF2D family. As to quaternary structure, interacts with the 40S ribosomal subunit.

This Saccharomyces cerevisiae (strain ATCC 204508 / S288c) (Baker's yeast) protein is Translation machinery-associated protein 64 (TMA64).